Reading from the N-terminus, the 999-residue chain is Cytoplasmic dynein 2 intermediate chain 1 (999 aa).

Composition is skewed to basic and acidic residues over residues 1 to 19 (MEPG…DDLR), 29 to 138 (PKEE…EEIR), 146 to 260 (LLSR…EDRH), and 268 to 300 (GLHY…KELE). A disordered region spans residues 1–350 (MEPGKRRTKD…EHEAREKAEE (350 aa)). Position 250 is a phosphoserine (S250). A compositionally biased stretch (acidic residues) spans 318–338 (LEDDFVDYEDDFEVCDGDDDS). Residues 339 to 350 (NNEHEAREKAEE) show a composition bias toward basic and acidic residues. Positions 416-495 (ASHRQKSRSQ…DIQTEDIETR (80 aa)) are binding to the DYNLT2B-DYNLT1/DYNLT3 dimer. WD repeat units follow at residues 637 to 677 (ICES…RIHH), 718 to 764 (AYKK…KADI), 850 to 890 (VRPI…PIMQ), and 895 to 935 (TSGH…LGPV).

Belongs to the dynein light intermediate chain family. In terms of assembly, intermediate chain of the cytoplasmic dynein complex 2, a multisubunit complex, composed at least of eleven different proteins. The cytoplasmic dynein 2 complex consists of two catalytic heavy chains (HCs) and a number of non-catalytic subunits presented by intermediate chains (ICs), light intermediate chains (LICs) and light chains (LCs). Among them, a heavy chain (DYNC2H1), two intermediate chains (DYNC2I2 and DYNC2I1), a light intermediate chain (DYNC2LI1), and a light chain (DYNLT2B) are unique to the cytoplasmic dynein complex 2, but a subset of the light chains are also shared by dynein-1 and dynein-2 complexes. Interacts with DYNC2I2; their C-terminal domains each bind a copy of the heavy chain, and their extended N-terminal regions are held together by an array of light chain dimers. Interacts with DYNLT2B. Interacts (via the N-terminal half) with DYNLT2B-DYNLT1 dimer or with DYNLT2B-DYNLT3 dimer; this interaction is crucial for retrograde trafficking of ciliary proteins.

The protein resides in the cell projection. It is found in the cilium. It localises to the cytoplasm. Its subcellular location is the cytoskeleton. The protein localises to the microtubule organizing center. The protein resides in the centrosome. Its function is as follows. Acts as one of several non-catalytic accessory components of the cytoplasmic dynein 2 complex (dynein-2 complex), a motor protein complex that drives the movement of cargos along microtubules within cilia and flagella in concert with the intraflagellar transport (IFT) system. DYNC2I1 plays a major role in retrograde ciliary protein trafficking in cilia and flagella. Also requires to maintain a functional transition zone. This is Cytoplasmic dynein 2 intermediate chain 1 (Dync2i1) from Mus musculus (Mouse).